The primary structure comprises 167 residues: Peptidyl-prolyl cis-trans isomerase-like 3 (167 aa).

Residues 1–153 enclose the PPIase cyclophilin-type domain; that stretch reads MSVTLHTNLG…QEIKLLNVTV (153 aa).

The protein belongs to the cyclophilin-type PPIase family. PPIL3 subfamily.

It carries out the reaction [protein]-peptidylproline (omega=180) = [protein]-peptidylproline (omega=0). In terms of biological role, PPIases accelerate the folding of proteins. It catalyzes the cis-trans isomerization of proline imidic peptide bonds in oligopeptides. In Cryptococcus neoformans var. neoformans serotype D (strain B-3501A) (Filobasidiella neoformans), this protein is Peptidyl-prolyl cis-trans isomerase-like 3 (CYP10).